Here is a 290-residue protein sequence, read N- to C-terminus: O-methyltransferase agiB (290 aa).

Aspartate 155 serves as a coordination point for S-adenosyl-L-methionine. The active-site Proton acceptor is the histidine 194.

This sequence belongs to the class I-like SAM-binding methyltransferase superfamily. Cation-independent O-methyltransferase family.

Its pathway is secondary metabolite biosynthesis. O-methyltransferase; part of the gene cluster that mediates the biosynthesis of the aspergillicins A and F, 2 cryptic cyclic hexa-depsipeptides. The hexamodular NRPS agiA catalyzes the condensation of the six amino acid residues including N-Me-L-O-Me-tyrosine, L-proline 1, L-proline 2, D-isoleucine, O-acetyl-threonine, and L-isoleucine. The starting condensation domain (C1) of agiA probably loads acetyl-CoA which is condensed on the N-terminus of threonine by the first module to yield O-acetyl-threonine. The second module then loads L-isoleucine. The epimerase (E) domain on module 2 is probably involved in the formation of the D-isoleucine moiety. Modules 3 and 4 further load 2 successive L-prolines. Module 5 is then involved in the condensation of O-Me-L-tyrosine produced by the O-methyltransferase agiB and the N-methyl transferase (NMeT) domain on module 5 probably catalyzes the N-methylation to yield the N-Me-L-O-Me-tyrosine moiety. The A domain of module 5 loads preferentially O-Me-L-tyrosine, but it can also accept L-phenylalanine, which leads to the production of aspergillicin G. Module 6 then loads the last residue, L-isoleucine. The C-terminal thiolesterase (TE) domain probably cyclizes the peptide using the hydroxy group from threonine to form the cyclic depsipeptide. The protein is O-methyltransferase agiB of Aspergillus flavus (strain ATCC 200026 / FGSC A1120 / IAM 13836 / NRRL 3357 / JCM 12722 / SRRC 167).